A 325-amino-acid polypeptide reads, in one-letter code: Glutaminase (325 aa).

Residues Ser76, Asn125, Glu169, Asn176, Tyr200, Tyr252, and Val270 each coordinate substrate.

The protein belongs to the glutaminase family. As to quaternary structure, homotetramer.

The catalysed reaction is L-glutamine + H2O = L-glutamate + NH4(+). The polypeptide is Glutaminase (Clavibacter michiganensis subsp. michiganensis (strain NCPPB 382)).